We begin with the raw amino-acid sequence, 231 residues long: N-acetylmuramate alpha-1-phosphate uridylyltransferase (231 aa).

Residues Gly11 to Arg13 and Lys23 each bind UTP. A substrate-binding site is contributed by Asn106. Asp108 contributes to the Mg(2+) binding site. 2 residues coordinate substrate: Asp146 and Asp213. Asp213 lines the Mg(2+) pocket.

It belongs to the nucleotidyltransferase MurU family. In terms of assembly, monomer. It depends on Mg(2+) as a cofactor.

The catalysed reaction is N-acetyl-alpha-D-muramate 1-phosphate + UDP + H(+) = UDP-N-acetyl-alpha-D-muramate + phosphate. Its pathway is cell wall biogenesis; peptidoglycan recycling. Functionally, catalyzes the formation of UDP-N-acetylmuramate (UDP-MurNAc), a crucial precursor of the bacterial peptidoglycan cell wall, from UTP and MurNAc-alpha-1P. Is likely involved in peptidoglycan recycling as part of a cell wall recycling pathway that bypasses de novo biosynthesis of the peptidoglycan precursor UDP-MurNAc. Is able to complement the fosfomycin sensitivity phenotype of a P.putida mutant lacking murU. This is N-acetylmuramate alpha-1-phosphate uridylyltransferase from Neisseria meningitidis serogroup B (strain ATCC BAA-335 / MC58).